Here is a 222-residue protein sequence, read N- to C-terminus: Peptidyl-prolyl cis-trans isomerase FKBP7 (222 aa).

The first 23 residues, 1 to 23 (MPKTMHFLFRFIVFFYLWGLFTA), serve as a signal peptide directing secretion. N-linked (GlcNAc...) asparagine glycosylation occurs at N45. A PPIase FKBP-type domain is found at 53-145 (GDLLNAHYDG…IFEIELYAVT (93 aa)). EF-hand domains are found at residues 145–180 (TKGP…EFEK) and 189–222 (YQDA…HDEL). Ca(2+) is bound by residues D158, D160, D162, Q164, E169, D202, D204, D206, and E213. Residues 219–222 (HDEL) carry the Prevents secretion from ER motif.

In terms of processing, glycosylated.

It is found in the endoplasmic reticulum lumen. The enzyme catalyses [protein]-peptidylproline (omega=180) = [protein]-peptidylproline (omega=0). In terms of biological role, PPIases accelerate the folding of proteins during protein synthesis. The protein is Peptidyl-prolyl cis-trans isomerase FKBP7 (FKBP7) of Pongo abelii (Sumatran orangutan).